Reading from the N-terminus, the 275-residue chain is MSRLQDVVVNEMKVKKQIDSVEEIQEIKQFIKAYVKSHSFIQTLVLGISGGQDSTLTGKLAQLAVNELKEEGRNCKFIAVKLPYGVQQDAHEVEDALEFINPDTTYTVNIKPAVDQSVQSLSEAGIKLTDFQKGNEKARERMKVQFSIASNTQGIVLGTDHSAENITGFYTKYGDGAADIAPIFGLNKRQGKQLLAYLGAPKHLYEKVPTADLEDDKPQLPDEEALGVSYHDIDDYLEGKEIPGTARETIEKHYVRNAHKRELAYTRYSWPKYNK.

47-54 (GISGGQDS) provides a ligand contact to ATP. Residue D53 coordinates Mg(2+). R139 lines the deamido-NAD(+) pocket. ATP is bound at residue T159. E164 provides a ligand contact to Mg(2+). Deamido-NAD(+)-binding residues include K172 and D179. ATP contacts are provided by K188 and T210. Deamido-NAD(+) is bound at residue 259–260 (HK).

Belongs to the NAD synthetase family. In terms of assembly, homodimer.

The enzyme catalyses deamido-NAD(+) + NH4(+) + ATP = AMP + diphosphate + NAD(+) + H(+). It participates in cofactor biosynthesis; NAD(+) biosynthesis; NAD(+) from deamido-NAD(+) (ammonia route): step 1/1. Functionally, catalyzes the ATP-dependent amidation of deamido-NAD to form NAD. Uses ammonia as a nitrogen source. This Staphylococcus epidermidis (strain ATCC 35984 / DSM 28319 / BCRC 17069 / CCUG 31568 / BM 3577 / RP62A) protein is NH(3)-dependent NAD(+) synthetase.